The following is a 224-amino-acid chain: Ribonuclease 3 (224 aa).

The 123-residue stretch at 5–127 folds into the RNase III domain; it reads LERLCRRLNY…ILAAIYLDGG (123 aa). Glu-40 lines the Mg(2+) pocket. Residue Asp-44 is part of the active site. Residues Asp-113 and Glu-116 each coordinate Mg(2+). Residue Glu-116 is part of the active site. Residues 154–224 form the DRBM domain; sequence DAKTQLQEFL…AKAMLEQLQG (71 aa).

This sequence belongs to the ribonuclease III family. As to quaternary structure, homodimer. The cofactor is Mg(2+).

It localises to the cytoplasm. It catalyses the reaction Endonucleolytic cleavage to 5'-phosphomonoester.. Functionally, digests double-stranded RNA. Involved in the processing of primary rRNA transcript to yield the immediate precursors to the large and small rRNAs (23S and 16S). Processes some mRNAs, and tRNAs when they are encoded in the rRNA operon. Processes pre-crRNA and tracrRNA of type II CRISPR loci if present in the organism. In Legionella pneumophila (strain Lens), this protein is Ribonuclease 3.